Reading from the N-terminus, the 234-residue chain is Short neuropeptide F (234 aa).

The signal sequence occupies residues 1-22 (MYRINLTTFTLLLVLAVGSLMS). A propeptide spanning residues 23–56 (ESLHPSDGAINDLYEYLLQREYAAPVSYADHQIK) is cleaved from the precursor. Phenylalanine amide occurs at positions 69 and 101. Trp-132 carries the post-translational modification Tryptophan amide. Phe-165 carries the phenylalanine amide modification. The segment covering 181–190 (TTGQQAQPAN) has biased composition (polar residues). Positions 181-234 (TTGQQAQPANEASEKRAPTQRLRWGRSDPALAKDSSEDKALDVEESENTNADDK) are disordered. At Trp-204 the chain carries Tryptophan amide. Residues 207-234 (SDPALAKDSSEDKALDVEESENTNADDK) constitute a propeptide that is removed on maturation.

This sequence belongs to the NPY family. In terms of tissue distribution, expressed in all body parts of larva, pupae and adults.

It is found in the secreted. Plays a role in controlling food intake and regulating body size. The polypeptide is Short neuropeptide F (Anopheles gambiae (African malaria mosquito)).